The primary structure comprises 131 residues: uncharacterized protein (131 aa).

The segment at asparagine 99–phenylalanine 131 is disordered. Residues glutamine 102–glutamate 113 are compositionally biased toward acidic residues. Positions lysine 114–phenylalanine 131 are enriched in basic and acidic residues.

This is an uncharacterized protein from Sulfolobus islandicus rod-shaped virus 1 (SIRV-1).